The primary structure comprises 701 residues: Peptide transporter CstA (701 aa).

The Cytoplasmic portion of the chain corresponds to 1–6; that stretch reads MNKSGK. Residues 7-27 form a helical membrane-spanning segment; it reads YLVWTVLSVMGAFALGYIALN. Residues 28 to 33 lie on the Periplasmic side of the membrane; that stretch reads RGEQIN. A helical transmembrane segment spans residues 34–54; sequence ALWIVVASVCIYLIAYRFYGL. Over 55–86 the chain is Cytoplasmic; it reads YIAKNVLAVDPTRMTPAVRHNDGLDYVPTDKK. The helical transmembrane segment at 87 to 107 threads the bilayer; the sequence is VLFGHHFAAIAGAGPLVGPVL. The Periplasmic portion of the chain corresponds to 108–117; it reads AAQMGYLPGM. Residues 118–138 traverse the membrane as a helical segment; that stretch reads IWLLAGVVLAGAVQDFMVLFV. Topologically, residues 139–160 are cytoplasmic; that stretch reads STRRDGRSLGELVKEEMGPTAG. A helical membrane pass occupies residues 161–181; that stretch reads VIALVACFMIMVIILAVLAMI. Topologically, residues 182-189 are periplasmic; that stretch reads VVKALTHS. The helical transmembrane segment at 190–210 threads the bilayer; the sequence is PWGTYTVAFTIPLALFMGIYL. Residues 211-217 are Cytoplasmic-facing; sequence RYLRPGR. A helical transmembrane segment spans residues 218–238; sequence IGEVSVIGLVFLIFAIISGGW. Topologically, residues 239–255 are periplasmic; the sequence is VAESPTWAPYFDFTGVQ. A helical membrane pass occupies residues 256–276; it reads LTWMLVGYGFVAAVLPVWLLL. Residues 277-280 are Cytoplasmic-facing; sequence APRD. Residues 281-301 traverse the membrane as a helical segment; that stretch reads YLSTFLKIGTIVGLAVGILIM. The Periplasmic segment spans residues 302 to 324; it reads RPTLTMPALTKFVDGTGPVWTGN. A helical transmembrane segment spans residues 325–345; that stretch reads LFPFLFITIACGAVSGFHALI. Over 346–372 the chain is Cytoplasmic; it reads SSGTTPKMLANEGQACFIGYGGMLMES. The helical transmembrane segment at 373–393 threads the bilayer; that stretch reads FVAIMALVSACIIDPGVYFAM. The Periplasmic segment spans residues 394-395; sequence NS. The helical transmembrane segment at 396–416 threads the bilayer; sequence PMAVLAPAGTADVVASAAQVV. The Cytoplasmic portion of the chain corresponds to 417-439; it reads SSWGFSITPDTLNQIASEVGEQS. The chain crosses the membrane as a helical span at residues 440–460; it reads IISRAGGAPTLAVGMAYILHG. Residues 461–463 are Periplasmic-facing; the sequence is ALG. Residues 464–484 form a helical membrane-spanning segment; that stretch reads GMMDVAFWYHFAILFEALFIL. At 485–523 the chain is on the cytoplasmic side; that stretch reads TAVDAGTRAARFMLQDLLGVVSPGLKRTDSLPANLLATA. The helical transmembrane segment at 524 to 544 threads the bilayer; it reads LCVLAWGYFLHQGVVDPLGGI. The Periplasmic segment spans residues 545–550; sequence NTLWPL. A helical transmembrane segment spans residues 551-571; sequence FGIANQMLAGMALMLCAVVLF. The Cytoplasmic segment spans residues 572-577; it reads KMKRQR. Residues 578–598 traverse the membrane as a helical segment; that stretch reads YAWVALVPTAWLLICTLTAGW. Residues 599–643 lie on the Periplasmic side of the membrane; sequence QKAFSPDAKVGFLAIANKFQAMIDSGNIPSQYTESQLAQLVFNNR. A helical membrane pass occupies residues 644–664; that stretch reads LDAGLTIFFMVVVVVLALFSI. The Cytoplasmic portion of the chain corresponds to 665–701; it reads KTALAALKDPKPTAKETPYEPMPENVEEIVAQAKGAH.

The protein belongs to the peptide transporter carbon starvation (CstA) (TC 2.A.114) family.

The protein resides in the cell inner membrane. Functionally, involved in peptide utilization during carbon starvation. The sequence is that of Peptide transporter CstA from Escherichia coli (strain K12).